Consider the following 253-residue polypeptide: Proproteinase E (253 aa).

A propeptide spans 1–11 (FSQPFSRPSSR) (activation peptide). The 240-residue stretch at 12 to 251 (VVNGEDAVPY…FIDWIDETIA (240 aa)) folds into the Peptidase S1 domain. Cystine bridges form between C41–C57, C100–C103, C140–C206, C171–C187, and C196–C227.

Belongs to the peptidase S1 family. Monomer. The zymogen is secreted as a ternary complex composed of procarboxypeptidase A, chymotrypsinogen C and proproteinase E. Pancreas.

It is found in the secreted. It localises to the extracellular space. In terms of biological role, may protect procarboxypeptidase A against denaturation in the acidic environment of the ruminant duodenum. The sequence is that of Proproteinase E from Bos taurus (Bovine).